A 551-amino-acid polypeptide reads, in one-letter code: Chaperonin GroEL 4 (551 aa).

ATP is bound by residues 30-33 (TLGP), lysine 51, 87-91 (DGTTT), glycine 415, and aspartate 495.

It belongs to the chaperonin (HSP60) family. In terms of assembly, forms a cylinder of 14 subunits composed of two heptameric rings stacked back-to-back. Interacts with the co-chaperonin GroES.

The protein localises to the cytoplasm. The enzyme catalyses ATP + H2O + a folded polypeptide = ADP + phosphate + an unfolded polypeptide.. Together with its co-chaperonin GroES, plays an essential role in assisting protein folding. The GroEL-GroES system forms a nano-cage that allows encapsulation of the non-native substrate proteins and provides a physical environment optimized to promote and accelerate protein folding. The protein is Chaperonin GroEL 4 of Mesorhizobium japonicum (strain LMG 29417 / CECT 9101 / MAFF 303099) (Mesorhizobium loti (strain MAFF 303099)).